Reading from the N-terminus, the 367-residue chain is Alginate lyase (367 aa).

The first 24 residues, 1 to 24, serve as a signal peptide directing secretion; the sequence is MTLLKRISSPALLALALFGGAAHA. Residues 63 to 64, 136 to 137, and Y254 each bind substrate; these read SK and HT.

This sequence belongs to the polysaccharide lyase 5 family.

It localises to the periplasm. It carries out the reaction Eliminative cleavage of alginate to give oligosaccharides with 4-deoxy-alpha-L-erythro-hex-4-enuronosyl groups at their non-reducing ends and beta-D-mannuronate at their reducing end.. Functionally, catalyzes the depolymerization of alginate by cleaving the beta-1,4 glycosidic bond between two adjacent sugar residues via a beta-elimination mechanism. May serve to degrade mislocalized alginate that is trapped in the periplasmic space. In Pseudomonas putida (strain GB-1), this protein is Alginate lyase.